Reading from the N-terminus, the 675-residue chain is Methionine--tRNA ligase (675 aa).

The 'HIGH' region signature appears at 15–25; it reads PYANGSIHLGH. Residues Cys-146, Cys-149, Cys-159, and Cys-162 each contribute to the Zn(2+) site. The short motif at 332–336 is the 'KMSKS' region element; the sequence is KMSKS. Residue Lys-335 participates in ATP binding. In terms of domain architecture, tRNA-binding spans 573–675; that stretch reads DFAKIDMRIA…SGAKPGHQVK (103 aa).

It belongs to the class-I aminoacyl-tRNA synthetase family. MetG type 1 subfamily. Homodimer. Zn(2+) is required as a cofactor.

The protein resides in the cytoplasm. It carries out the reaction tRNA(Met) + L-methionine + ATP = L-methionyl-tRNA(Met) + AMP + diphosphate. Functionally, is required not only for elongation of protein synthesis but also for the initiation of all mRNA translation through initiator tRNA(fMet) aminoacylation. This Proteus mirabilis (strain HI4320) protein is Methionine--tRNA ligase.